A 194-amino-acid chain; its full sequence is MSDPFGEENVEITEEFVEGDINENDLIDGNVEYVDGNGISFETTTFDNSNNNNNNNNHNNNSYNSGFDGDLSSVDGDMKPKETAPAMREYLEKHEKEMQEKKKKSEEKRQKKIAEAKQSLDNFYSEREAKKKTALKNNRDHNKSLETDSTSGNTTHTWESVVSMIDLQAKPNPANKDTSRMREILIRLKNQPIV.

The disordered stretch occupies residues 44–156 (TTFDNSNNNN…TDSTSGNTTH (113 aa)). The span at 48 to 65 (NSNNNNNNNNHNNNSYNS) shows a compositional bias: low complexity. Basic and acidic residues-rich tracts occupy residues 89 to 115 (EYLE…KIAE) and 124 to 146 (YSER…KSLE). The segment at 124–194 (YSEREAKKKT…LIRLKNQPIV (71 aa)) is required for binding clathrin heavy chain, localization to punctae, and for cytokinesis and fruiting body development. The span at 147 to 156 (TDSTSGNTTH) shows a compositional bias: polar residues.

The protein belongs to the clathrin light chain family. As to quaternary structure, clathrin coats are formed from molecules containing 3 heavy chains and 3 light chains.

Its subcellular location is the cytoplasmic vesicle membrane. It localises to the membrane. It is found in the coated pit. In terms of biological role, clathrin is the major protein of the polyhedral coat of coated pits and vesicles. The chain is Clathrin light chain (clc) from Dictyostelium discoideum (Social amoeba).